The primary structure comprises 172 residues: Epithelial membrane protein 2 (172 aa).

4 helical membrane passes run 1–21 (MLVILAFIIVFHIVSTALLFI), 72–92 (TMILSTILSCISFLIFLLQLF), 100–120 (FVLTAIIQLMSCLCVMIGASV), and 148–168 (FILAWVAFAFTFISGLMYMIL).

This sequence belongs to the PMP-22/EMP/MP20 family. In terms of assembly, interacts with PTK2; regulates PTK2 activation and localization. Interacts with ITGB3; regulates the levels of the heterodimer ITGA5-ITGB3 integrin surface expression. Interacts with P2RX7 (via C-terminus). Interacts with ITGB1; the interaction may be direct or indirect and ITGB1 has a heterodimer form. As to expression, expressed in glomeruli.

It is found in the golgi apparatus membrane. The protein localises to the cell membrane. Its subcellular location is the apical cell membrane. The protein resides in the membrane raft. It localises to the cytoplasm. It is found in the nucleus. The protein localises to the perinuclear region. Functions as a key regulator of cell membrane composition by regulating protein surface expression. Also, plays a role in regulation of processes including cell migration, cell proliferation, cell contraction and cell adhesion. Regulates transepithelial migration of neutrophils into the alveolar lumen, potentially via mediation of cell surface expression of adhesion markers and lipid raft formation. Negatively regulates caveolae formation by reducing CAV1 expression and CAV1 amount by increasing lysosomal degradation. Facilitates surface trafficking and the formation of lipid rafts bearing GPI-anchor proteins. Regulates surface expression of MHC1 and ICAM1 proteins increasing susceptibility to T-cell mediated cytotoxicity. Regulates the plasma membrane expression of the integrin heterodimers ITGA6-ITGB1, ITGA5-ITGB3 and ITGA5-ITGB1 resulting in modulation of cell-matrix adhesion. Also regulates many processes through PTK2. Regulates blood vessel endothelial cell migration and angiogenesis by regulating VEGF protein expression through PTK2 activation. Regulates cell migration and cell contraction through PTK2 and SRC activation. Regulates focal adhesion density, F-actin conformation and cell adhesion capacity through interaction with PTK2. Positively regulates cell proliferation. Plays a role during cell death and cell blebbing. Promotes angiogenesis and vasculogenesis through induction of VEGFA via a HIF1A-dependent pathway. Also plays a role in embryo implantation by regulating surface trafficking of integrin heterodimer ITGA5-ITGB3. Plays a role in placental angiogenesis and uterine natural killer cell regulation at the maternal-fetal placental interface, however not required in the maternal tissues for a viable pregnancy. Involved in the early stages of embryogenic development and cardiogenesis, potentially via regulation of epithelial-mesenchymal transition timing. May play a role in glomerular filtration. This chain is Epithelial membrane protein 2 (Emp2), found in Rattus norvegicus (Rat).